The following is a 192-amino-acid chain: Adenylate kinase (192 aa).

11-16 (GSGKGT) contacts ATP. The tract at residues 31–60 (STGDIFRANVKGETPLGIEAKKYMDNGDFV) is NMP. AMP-binding positions include T32, R37, 58-60 (DFV), 86-89 (GYPR), and Q93. The LID stretch occupies residues 127–137 (GRAKETGRSDD). Residue R128 coordinates ATP. Positions 134 and 145 each coordinate AMP. Residue G173 participates in ATP binding.

The protein belongs to the adenylate kinase family. In terms of assembly, monomer.

It localises to the cytoplasm. The catalysed reaction is AMP + ATP = 2 ADP. The protein operates within purine metabolism; AMP biosynthesis via salvage pathway; AMP from ADP: step 1/1. Its function is as follows. Catalyzes the reversible transfer of the terminal phosphate group between ATP and AMP. Plays an important role in cellular energy homeostasis and in adenine nucleotide metabolism. The sequence is that of Adenylate kinase from Pseudarthrobacter chlorophenolicus (strain ATCC 700700 / DSM 12829 / CIP 107037 / JCM 12360 / KCTC 9906 / NCIMB 13794 / A6) (Arthrobacter chlorophenolicus).